A 282-amino-acid polypeptide reads, in one-letter code: Elongation factor Ts (282 aa).

Residues 79–82 (TDFV) are involved in Mg(2+) ion dislocation from EF-Tu.

The protein belongs to the EF-Ts family.

It localises to the cytoplasm. Associates with the EF-Tu.GDP complex and induces the exchange of GDP to GTP. It remains bound to the aminoacyl-tRNA.EF-Tu.GTP complex up to the GTP hydrolysis stage on the ribosome. The chain is Elongation factor Ts from Shewanella woodyi (strain ATCC 51908 / MS32).